The chain runs to 549 residues: Dihydroxy-acid dehydratase (549 aa).

Residue D78 coordinates Mg(2+). C119 serves as a coordination point for [2Fe-2S] cluster. The Mg(2+) site is built by D120 and K121. Position 121 is an N6-carboxylysine (K121). C191 provides a ligand contact to [2Fe-2S] cluster. E441 is a Mg(2+) binding site. The active-site Proton acceptor is S466.

Belongs to the IlvD/Edd family. As to quaternary structure, homodimer. [2Fe-2S] cluster is required as a cofactor. It depends on Mg(2+) as a cofactor.

It catalyses the reaction (2R)-2,3-dihydroxy-3-methylbutanoate = 3-methyl-2-oxobutanoate + H2O. It carries out the reaction (2R,3R)-2,3-dihydroxy-3-methylpentanoate = (S)-3-methyl-2-oxopentanoate + H2O. It functions in the pathway amino-acid biosynthesis; L-isoleucine biosynthesis; L-isoleucine from 2-oxobutanoate: step 3/4. Its pathway is amino-acid biosynthesis; L-valine biosynthesis; L-valine from pyruvate: step 3/4. Its function is as follows. Functions in the biosynthesis of branched-chain amino acids. Catalyzes the dehydration of (2R,3R)-2,3-dihydroxy-3-methylpentanoate (2,3-dihydroxy-3-methylvalerate) into 2-oxo-3-methylpentanoate (2-oxo-3-methylvalerate) and of (2R)-2,3-dihydroxy-3-methylbutanoate (2,3-dihydroxyisovalerate) into 2-oxo-3-methylbutanoate (2-oxoisovalerate), the penultimate precursor to L-isoleucine and L-valine, respectively. This is Dihydroxy-acid dehydratase from Methanobrevibacter smithii (strain ATCC 35061 / DSM 861 / OCM 144 / PS).